Consider the following 446-residue polypeptide: Glutamine synthetase (446 aa).

The 94-residue stretch at 14–107 (NNVKFLRFQF…IICDVYRKNG (94 aa)) folds into the GS beta-grasp domain. The GS catalytic domain occupies 114–446 (PRGCLKRVLA…DWEFNKYVRI (333 aa)). Residues Glu138 and Glu140 each contribute to the Mg(2+) site. ATP is bound at residue Glu187. Mg(2+) contacts are provided by Glu192 and Glu199. Residues 243–244 (NG) and Gly244 each bind L-glutamate. Position 248 (His248) interacts with Mg(2+). Ser252 contributes to the ATP binding site. Positions 301, 307, and 319 each coordinate L-glutamate. ATP contacts are provided by Arg319, Arg324, and Lys331. Glu336 contacts Mg(2+). Arg338 lines the L-glutamate pocket.

This sequence belongs to the glutamine synthetase family. In terms of assembly, oligomer of 12 subunits arranged in the form of two hexagons. Mg(2+) serves as cofactor.

Its subcellular location is the cytoplasm. It catalyses the reaction L-glutamate + NH4(+) + ATP = L-glutamine + ADP + phosphate + H(+). In terms of biological role, probably involved in nitrogen metabolism via ammonium assimilation. Catalyzes the ATP-dependent biosynthesis of glutamine from glutamate and ammonia. This Methanococcus voltae protein is Glutamine synthetase.